The primary structure comprises 457 residues: NADP-specific glutamate dehydrogenase (457 aa).

The active site involves Lys-113.

The protein belongs to the Glu/Leu/Phe/Val dehydrogenases family. Homohexamer.

The enzyme catalyses L-glutamate + NADP(+) + H2O = 2-oxoglutarate + NH4(+) + NADPH + H(+). In Tuber borchii (White truffle), this protein is NADP-specific glutamate dehydrogenase (GDH).